We begin with the raw amino-acid sequence, 364 residues long: Phosphoserine aminotransferase (364 aa).

Arginine 46 provides a ligand contact to L-glutamate. Residues 80–81 (AR), tryptophan 106, threonine 157, aspartate 176, and glutamine 199 each bind pyridoxal 5'-phosphate. Lysine 200 carries the post-translational modification N6-(pyridoxal phosphate)lysine. A pyridoxal 5'-phosphate-binding site is contributed by 241–242 (NT).

Belongs to the class-V pyridoxal-phosphate-dependent aminotransferase family. SerC subfamily. In terms of assembly, homodimer. It depends on pyridoxal 5'-phosphate as a cofactor.

The protein localises to the cytoplasm. The enzyme catalyses O-phospho-L-serine + 2-oxoglutarate = 3-phosphooxypyruvate + L-glutamate. It carries out the reaction 4-(phosphooxy)-L-threonine + 2-oxoglutarate = (R)-3-hydroxy-2-oxo-4-phosphooxybutanoate + L-glutamate. It participates in amino-acid biosynthesis; L-serine biosynthesis; L-serine from 3-phospho-D-glycerate: step 2/3. Its pathway is cofactor biosynthesis; pyridoxine 5'-phosphate biosynthesis; pyridoxine 5'-phosphate from D-erythrose 4-phosphate: step 3/5. Catalyzes the reversible conversion of 3-phosphohydroxypyruvate to phosphoserine and of 3-hydroxy-2-oxo-4-phosphonooxybutanoate to phosphohydroxythreonine. The protein is Phosphoserine aminotransferase of Vibrio parahaemolyticus serotype O3:K6 (strain RIMD 2210633).